The sequence spans 350 residues: tRNA N6-adenosine threonylcarbamoyltransferase (350 aa).

Positions 109 and 113 each coordinate Fe cation. Substrate-binding positions include 136 to 140, aspartate 169, glycine 182, aspartate 186, and asparagine 284; that span reads TVSGG. Position 312 (aspartate 312) interacts with Fe cation.

This sequence belongs to the KAE1 / TsaD family. Requires Fe(2+) as cofactor.

Its subcellular location is the cytoplasm. It catalyses the reaction L-threonylcarbamoyladenylate + adenosine(37) in tRNA = N(6)-L-threonylcarbamoyladenosine(37) in tRNA + AMP + H(+). Functionally, required for the formation of a threonylcarbamoyl group on adenosine at position 37 (t(6)A37) in tRNAs that read codons beginning with adenine. Is involved in the transfer of the threonylcarbamoyl moiety of threonylcarbamoyl-AMP (TC-AMP) to the N6 group of A37, together with TsaE and TsaB. TsaD likely plays a direct catalytic role in this reaction. This chain is tRNA N6-adenosine threonylcarbamoyltransferase, found in Pelodictyon phaeoclathratiforme (strain DSM 5477 / BU-1).